Consider the following 431-residue polypeptide: Histidinol dehydrogenase (431 aa).

Residues Tyr127, Gln189, and Asn212 each coordinate NAD(+). Substrate contacts are provided by Ser237, Gln259, and His262. Residues Gln259 and His262 each contribute to the Zn(2+) site. Catalysis depends on proton acceptor residues Glu326 and His327. Substrate is bound by residues His327, Asp360, Glu414, and His419. Asp360 is a binding site for Zn(2+). Residue His419 participates in Zn(2+) binding.

It belongs to the histidinol dehydrogenase family. Zn(2+) is required as a cofactor.

It carries out the reaction L-histidinol + 2 NAD(+) + H2O = L-histidine + 2 NADH + 3 H(+). It functions in the pathway amino-acid biosynthesis; L-histidine biosynthesis; L-histidine from 5-phospho-alpha-D-ribose 1-diphosphate: step 9/9. In terms of biological role, catalyzes the sequential NAD-dependent oxidations of L-histidinol to L-histidinaldehyde and then to L-histidine. This is Histidinol dehydrogenase from Xanthomonas axonopodis pv. citri (strain 306).